The chain runs to 230 residues: Esterase OVCA2 (230 aa).

Catalysis depends on charge relay system residues Ser-124, Asp-182, and His-209.

Belongs to the LovG family.

It carries out the reaction a carboxylic ester + H2O = an alcohol + a carboxylate + H(+). Functionally, exhibits ester hydrolase activity with a strong preference for long-chain alkyl ester substrates and high selectivity against a variety of short, branched, and substituted esters. Is able to hydrolyze ester bonds within a wide range of p-nitrophenyl derivatives (C2-C14) in vitro, with a strong preference toward substrates of &gt;8 carbons. In Xenopus tropicalis (Western clawed frog), this protein is Esterase OVCA2 (ovca2).